We begin with the raw amino-acid sequence, 220 residues long: MKGIVLLSGGLDSAVCLAFGVRSLEVALCLTADYGQLAAGREIAAAAALSAHYGIRHQVVELPFLREIDCSALTGRLGLPEPEEMELDDPVRSAETARQVWVPNRNGLLVNVAACYAEALGCERIIAGFNREEAQHFPDNSPQFLDAVNHSLAYSTLSGIRVISYTQQLDKAEIVALGQRLGLPWSLVWSCYRGGDEACGVCESCRRLERAKRSAGGVRV.

7–17 (LSGGLDSAVCL) lines the ATP pocket. 4 residues coordinate Zn(2+): cysteine 191, cysteine 199, cysteine 202, and cysteine 205.

The protein belongs to the QueC family. In terms of assembly, homodimer. Zn(2+) serves as cofactor.

The enzyme catalyses 7-carboxy-7-deazaguanine + NH4(+) + ATP = 7-cyano-7-deazaguanine + ADP + phosphate + H2O + H(+). The protein operates within purine metabolism; 7-cyano-7-deazaguanine biosynthesis. Functionally, catalyzes the ATP-dependent conversion of 7-carboxy-7-deazaguanine (CDG) to 7-cyano-7-deazaguanine (preQ(0)). The polypeptide is 7-cyano-7-deazaguanine synthase (Desulforudis audaxviator (strain MP104C)).